Consider the following 515-residue polypeptide: Envelope glycoprotein (515 aa).

A signal peptide spans 1-33 (MPKERRSRRRPQPIIRWVSLTLTLLALCQPIQT). Residues 34–436 (WRCSLSLGNQ…GLTAWVRETI (403 aa)) are Extracellular-facing. 2 N-linked (GlcNAc...) asparagine; by host glycosylation sites follow: Asn129 and Asn203. The CXXC signature appears at 212-215 (CAIC). 3 cysteine pairs are disulfide-bonded: Cys212-Cys215, Cys212-Cys392, and Cys384-Cys391. Asn230, Asn251, Asn256, Asn271, and Asn287 each carry an N-linked (GlcNAc...) asparagine; by host glycan. The tract at residues 304–324 (VAALTLGLALSVGLTGINVAV) is fusion peptide. Coiled coils occupy residues 330–376 (QRLT…WLYI) and 388–420 (NEPC…DWQW). Asn351 carries N-linked (GlcNAc...) asparagine; by host glycosylation. Residues 365-381 (AQNRRGLDWLYIRLGFQ) form an immunosuppression region. A CX6CC motif is present at residues 384 to 392 (CPTINEPCC). N-linked (GlcNAc...) asparagine; by host glycosylation occurs at Asn398. A helical membrane pass occupies residues 437-457 (HSVLSLFLLALFLLFLAPCLI). Cys455 carries S-palmitoyl cysteine; by host lipidation. Over 458-515 (KCLTSRLLKLLRQAPHFPEISFPPKPDSDYQALLPSAPEIYSHLSPTKPDYINLRPCP) the chain is Cytoplasmic.

As to quaternary structure, the mature envelope protein (Env) consists of a trimer of SU-TM heterodimers attached by a labile interchain disulfide bond. In terms of processing, specific enzymatic cleavages in vivo yield mature proteins. Envelope glycoproteins are synthesized as an inactive precursor that is N-glycosylated and processed likely by host cell furin or by a furin-like protease in the Golgi to yield the mature SU and TM proteins. The cleavage site between SU and TM requires the minimal sequence [KR]-X-[KR]-R. The CXXC motif is highly conserved across a broad range of retroviral envelope proteins. It is thought to participate in the formation of a labile disulfide bond possibly with the CX6CC motif present in the transmembrane protein. Isomerization of the intersubunit disulfide bond to an SU intrachain disulfide bond is thought to occur upon receptor recognition in order to allow membrane fusion. Post-translationally, the transmembrane protein is palmitoylated.

The protein localises to the virion membrane. It localises to the host cell membrane. Functionally, the surface protein (SU) attaches the virus to the host cell by binding to its receptor. This interaction triggers the refolding of the transmembrane protein (TM) and is thought to activate its fusogenic potential by unmasking its fusion peptide. Fusion occurs at the host cell plasma membrane. The transmembrane protein (TM) acts as a class I viral fusion protein. Under the current model, the protein has at least 3 conformational states: pre-fusion native state, pre-hairpin intermediate state, and post-fusion hairpin state. During viral and target cell membrane fusion, the coiled coil regions (heptad repeats) assume a trimer-of-hairpins structure, positioning the fusion peptide in close proximity to the C-terminal region of the ectodomain. The formation of this structure appears to drive apposition and subsequent fusion of viral and target cell membranes. Membranes fusion leads to delivery of the nucleocapsid into the cytoplasm. The sequence is that of Envelope glycoprotein (env) from Bos taurus (Bovine).